A 364-amino-acid chain; its full sequence is Geissoschizine synthase (364 aa).

One can recognise an Enoyl reductase (ER) domain in the interval 24–343 (GILHPIKFSR…DYLSTAMERI (320 aa)). Zn(2+) is bound at residue Cys51. Asn52 lines the NADP(+) pocket. Residues His73, Glu74, Cys104, Cys107, Cys110, Cys118, and Cys168 each contribute to the Zn(2+) site. NADP(+) contacts are provided by Leu194, Gly196, Leu197, Ser216, Thr217, Ser218, Lys221, Arg261, Val280, Ala282, Ser304, Thr306, and Arg351.

This sequence belongs to the zinc-containing alcohol dehydrogenase family. Class-III subfamily. Homodimer. It depends on Zn(2+) as a cofactor.

It catalyses the reaction (19E)-geissoschizine + NADP(+) = 4,21-dehydrogeissoschizine + NADPH. The enzyme catalyses (19E)-geissoschizine + NADPH + H(+) = (16R,19E)-isositsirikine + NADP(+). The catalysed reaction is (19E)-geissoschizine + NADPH + H(+) = (16R,19Z)-isositsirikine + NADP(+). Its pathway is alkaloid biosynthesis. Functionally, an alcohol dehydrogenase involved in the biosynthesis of seco-iridoid and derivatives monoterpenoid indole alkaloids natural products. Catalyzes the production of geissoschizine and its conversion to (16R)-E-isositsirikine and (16R)-Z-isositsirikine. The protein is Geissoschizine synthase of Alstonia scholaris (Dogbane).